The sequence spans 523 residues: MPEMGVFLLATQAMAAPGELLNLALNAGAIAPEGAVLVAMLATLLVDLAGEQAAARWVPPICYAGLGTALVLLAQQWNAPLEPSFLGAFLADNLAIAFRAVVALSTLLSLLISWRYAEQSGTPIGEYAAILLAATLGAMLLCGSTDLVSVFVSLETLSVASYLLAGYMKRDARSSEAALKYLLVGSAAAAVFLYGASLLYGLSGTTSLQAIGIALLTSPTPLAALSLVFVLATVAFKIAAVPFHQWTPDVYEGSPTPVVAFLSVGSKAAGFALALRLLVGCFGAFDNQWKLLFTVLAVLSMTLGNVVALAQTSMKRMLAYSSIGQAGFVMIGLVCGTEDGFAAMVLYMAAYLFMNLGAFACIILFSIRTGSDRISDYAGLYQKDPLITLGLSLCLLSLGGIPPMLGFFGKIYLFFAGWADHQYLLVVVGLVTSVVSIYYYISVIKMMVVKEPKEASDVVKSYPSIQWSTIGMPPLRIALVGCVVVTAVGGILSNPLFQWANNAVAGTPLLQEAIALGSQRSIG.

The next 14 membrane-spanning stretches (helical) occupy residues 29 to 49 (AIAP…VDLA), 57 to 77 (WVPP…AQQW), 94 to 114 (LAIA…LISW), 123 to 143 (PIGE…LLCG), 147 to 167 (LVSV…LAGY), 182 to 202 (LLVG…LYGL), 221 to 243 (PLAA…AVPF), 255 to 275 (PTPV…ALAL), 291 to 311 (LLFT…ALAQ), 317 to 337 (MLAY…VCGT), 345 to 365 (VLYM…IILF), 389 to 409 (LGLS…GFFG), 424 to 444 (LLVV…ISVI), and 477 to 497 (IALV…NPLF).

The protein belongs to the complex I subunit 2 family. As to quaternary structure, NDH-1 can be composed of about 15 different subunits; different subcomplexes with different compositions have been identified which probably have different functions.

The protein localises to the cellular thylakoid membrane. The catalysed reaction is a plastoquinone + NADH + (n+1) H(+)(in) = a plastoquinol + NAD(+) + n H(+)(out). It catalyses the reaction a plastoquinone + NADPH + (n+1) H(+)(in) = a plastoquinol + NADP(+) + n H(+)(out). NDH-1 shuttles electrons from an unknown electron donor, via FMN and iron-sulfur (Fe-S) centers, to quinones in the respiratory and/or the photosynthetic chain. The immediate electron acceptor for the enzyme in this species is believed to be plastoquinone. Couples the redox reaction to proton translocation, and thus conserves the redox energy in a proton gradient. Cyanobacterial NDH-1 also plays a role in inorganic carbon-concentration. This is NAD(P)H-quinone oxidoreductase subunit 2 from Prochlorococcus marinus (strain MIT 9303).